Here is a 276-residue protein sequence, read N- to C-terminus: BES1/BZR1 homolog protein 1 (276 aa).

3 disordered regions span residues 1-30, 76-125, and 155-191; these read MTASGGGSTAATGRMPTWKERENNKKRERR, TTYR…PTRF, and SAPVTPPISSPRRSNPRLPRWQSSNFPVSAPSSPTRR. Positions 14 to 87 are required for DNA-binding; sequence RMPTWKEREN…YRKGSRPTET (74 aa). Residues 84-103 are compositionally biased toward polar residues; sequence PTETTVPCSSIQLSPQSSAF. Low complexity predominate over residues 104 to 122; that stretch reads QSPIPSYQASPSSSSYPSP. Residue Thr-159 is modified to Phosphothreonine. Residues 164–174 are compositionally biased toward low complexity; that stretch reads SPRRSNPRLPR. A compositionally biased stretch (polar residues) spans 175–189; the sequence is WQSSNFPVSAPSSPT.

The protein belongs to the BZR/LAT61 family. Post-translationally, phosphorylated. Phosphorylation increases protein degradation.

The polypeptide is BES1/BZR1 homolog protein 1 (BEH1) (Arabidopsis thaliana (Mouse-ear cress)).